The primary structure comprises 466 residues: tRNA-2-methylthio-N(6)-dimethylallyladenosine synthase (466 aa).

Residues 5–125 (RKLHIKSYGC…LPELLARAGR (121 aa)) enclose the MTTase N-terminal domain. Residues C14, C50, C88, C166, C170, and C173 each contribute to the [4Fe-4S] cluster site. Residues 152-384 (RARGVSAFVT…QSLIDSQQAA (233 aa)) enclose the Radical SAM core domain. The 63-residue stretch at 387–449 (KAAIGTVVDV…RYSLLGELVA (63 aa)) folds into the TRAM domain.

It belongs to the methylthiotransferase family. MiaB subfamily. Monomer. [4Fe-4S] cluster serves as cofactor.

It is found in the cytoplasm. It catalyses the reaction N(6)-dimethylallyladenosine(37) in tRNA + (sulfur carrier)-SH + AH2 + 2 S-adenosyl-L-methionine = 2-methylsulfanyl-N(6)-dimethylallyladenosine(37) in tRNA + (sulfur carrier)-H + 5'-deoxyadenosine + L-methionine + A + S-adenosyl-L-homocysteine + 2 H(+). In terms of biological role, catalyzes the methylthiolation of N6-(dimethylallyl)adenosine (i(6)A), leading to the formation of 2-methylthio-N6-(dimethylallyl)adenosine (ms(2)i(6)A) at position 37 in tRNAs that read codons beginning with uridine. This is tRNA-2-methylthio-N(6)-dimethylallyladenosine synthase from Bradyrhizobium sp. (strain BTAi1 / ATCC BAA-1182).